A 152-amino-acid chain; its full sequence is Transcriptional regulator MraZ (152 aa).

2 SpoVT-AbrB domains span residues 5-52 and 81-124; these read VTSI…PLHE and ATEC…QDKQ.

Belongs to the MraZ family. As to quaternary structure, forms oligomers.

The protein resides in the cytoplasm. The protein localises to the nucleoid. In Actinobacillus pleuropneumoniae serotype 3 (strain JL03), this protein is Transcriptional regulator MraZ.